The sequence spans 120 residues: MQRNMLRAKLHRATVTQADLDYEGSCGIDEDLLDAADMREYEKIELYNVNNGERFSTYIIKGKRGSGEISLNGAAARRAHVGDKLIICTYAPMNEEEVANYKPKIVLLGDGNRIKEIKAV.

Ser-25 serves as the catalytic Schiff-base intermediate with substrate; via pyruvic acid. The residue at position 25 (Ser-25) is a Pyruvic acid (Ser). Residue Thr-57 participates in substrate binding. Catalysis depends on Tyr-58, which acts as the Proton donor. Gly-73–Ala-75 contacts substrate.

Belongs to the PanD family. Heterooctamer of four alpha and four beta subunits. Pyruvate serves as cofactor. Is synthesized initially as an inactive proenzyme, which is activated by self-cleavage at a specific serine bond to produce a beta-subunit with a hydroxyl group at its C-terminus and an alpha-subunit with a pyruvoyl group at its N-terminus.

It is found in the cytoplasm. The enzyme catalyses L-aspartate + H(+) = beta-alanine + CO2. It functions in the pathway cofactor biosynthesis; (R)-pantothenate biosynthesis; beta-alanine from L-aspartate: step 1/1. Catalyzes the pyruvoyl-dependent decarboxylation of aspartate to produce beta-alanine. The protein is Aspartate 1-decarboxylase of Ralstonia nicotianae (strain ATCC BAA-1114 / GMI1000) (Ralstonia solanacearum).